The chain runs to 204 residues: NAD(P)H-quinone oxidoreductase subunit M, chloroplastic (204 aa).

The N-terminal 27 residues, 1-27 (MASTSMSLTRACKVHAVLACSIPSVSS), are a transit peptide targeting the chloroplast.

The protein belongs to the NDH complex subunit M family. Part of the chloroplast NDH complex, composed of a mixture of chloroplast and nucleus encoded subunits. Component of the NDH subcomplex A, at least composed of ndhH, ndhI, ndhJ, ndhK, ndhL, ndhM, ndhN and ndhO.

It localises to the plastid. The protein localises to the chloroplast thylakoid membrane. It carries out the reaction a plastoquinone + NADH + (n+1) H(+)(in) = a plastoquinol + NAD(+) + n H(+)(out). The enzyme catalyses a plastoquinone + NADPH + (n+1) H(+)(in) = a plastoquinol + NADP(+) + n H(+)(out). Its function is as follows. NDH shuttles electrons from NAD(P)H:plastoquinone, via FMN and iron-sulfur (Fe-S) centers, to quinones in the photosynthetic chain and possibly in a chloroplast respiratory chain. The immediate electron acceptor for the enzyme in this species is believed to be plastoquinone. Couples the redox reaction to proton translocation, and thus conserves the redox energy in a proton gradient. The protein is NAD(P)H-quinone oxidoreductase subunit M, chloroplastic of Physcomitrium patens (Spreading-leaved earth moss).